The following is a 945-amino-acid chain: Isoleucine--tRNA ligase (945 aa).

The short motif at 66–76 (PYANGDIHLGH) is the 'HIGH' region element. Glutamate 581 contacts L-isoleucyl-5'-AMP. The 'KMSKS' region signature appears at 622–626 (KMSKS). Lysine 625 contacts ATP. Residues cysteine 908, cysteine 911, cysteine 928, and cysteine 931 each coordinate Zn(2+).

It belongs to the class-I aminoacyl-tRNA synthetase family. IleS type 1 subfamily. Monomer. The cofactor is Zn(2+).

It is found in the cytoplasm. The enzyme catalyses tRNA(Ile) + L-isoleucine + ATP = L-isoleucyl-tRNA(Ile) + AMP + diphosphate. In terms of biological role, catalyzes the attachment of isoleucine to tRNA(Ile). As IleRS can inadvertently accommodate and process structurally similar amino acids such as valine, to avoid such errors it has two additional distinct tRNA(Ile)-dependent editing activities. One activity is designated as 'pretransfer' editing and involves the hydrolysis of activated Val-AMP. The other activity is designated 'posttransfer' editing and involves deacylation of mischarged Val-tRNA(Ile). The chain is Isoleucine--tRNA ligase from Burkholderia cenocepacia (strain ATCC BAA-245 / DSM 16553 / LMG 16656 / NCTC 13227 / J2315 / CF5610) (Burkholderia cepacia (strain J2315)).